We begin with the raw amino-acid sequence, 421 residues long: MRLMLNEPVKEIMTKDVVTVTPDTPVSKALGIMEENGFHHLIVVDKKDGKEEYYLISMRDLLLASSTDEEVRSLMYKAHCVHEDTPFLDAVCEMLDSGQRAAPIVNNVGKMVGIITDYDIMARAAKSKIMKDTKVTKIMTRNVITINENDSIGKARALMRDNNIGRLVVVDDEGNPVGMVTEVDILKKVFKPKKKMTAGEFKGEKVPRMGQPVRLIMNTPLITVDVDASAADAARVMQEYDIRGVPVVKGKSLRGIVTRLDIIKYIADLKKGAMIEIELHGMLDPEFKDLAERIIATEVKKMVKHAGKIHWIKITIKKERDKGGVPYYRITTYVKTPNKLYVGEGRPKASLPNKLEAEGEDIAYVSEHERWEFIDVLKESLESVLRQLEADYDKYHPKHAGKVVKGQFPEEFNPEEFKKEE.

CBS domains are found at residues 13-74, 74-133, 139-195, and 217-274; these read MTKD…VRSL, LMYK…MKDT, MTRN…PKKK, and MNTP…KGAM.

This is an uncharacterized protein from Methanocaldococcus jannaschii (strain ATCC 43067 / DSM 2661 / JAL-1 / JCM 10045 / NBRC 100440) (Methanococcus jannaschii).